Here is a 60-residue protein sequence, read N- to C-terminus: Conotoxin Cal6.20 (60 aa).

Residues 1-22 (MKLTCVLIVAVLILTACQVIAA) form the signal peptide. 3 cysteine pairs are disulfide-bonded: cysteine 32–cysteine 42, cysteine 35–cysteine 48, and cysteine 41–cysteine 55.

This sequence belongs to the conotoxin O1 superfamily. Expressed by the venom duct.

The protein resides in the secreted. Functionally, probable neurotoxin. The chain is Conotoxin Cal6.20 from Californiconus californicus (California cone).